Consider the following 383-residue polypeptide: ERCC4 domain-containing protein EP364R (383 aa).

One can recognise an ERCC4 domain in the interval 3–101 (FLVADHREHH…QLYFFVEGPA (99 aa)). The disordered stretch occupies residues 336–367 (LHKVSDEASENASHDASENASDKVSSPTGHQT). A compositionally biased stretch (basic and acidic residues) spans 347–356 (ASHDASENAS). A compositionally biased stretch (polar residues) spans 357–367 (DKVSSPTGHQT).

Belongs to the asfivirus EP364R family.

Plays a role in the inhibition of type I interferon signaling pathway. Mechanistically, specifically interacts with 2',3'-cGAMP and cleaves it via its phosphodiesterase activity. In turn, prevents 2',3'-cGAMP interaction with host ER-resident STING1 leading to inhibition of downstream signaling pathway and type I interferon production. This chain is ERCC4 domain-containing protein EP364R, found in Ornithodoros (relapsing fever ticks).